The primary structure comprises 60 residues: Sec-independent protein translocase protein TatA (60 aa).

A helical transmembrane segment spans residues 1–21 (MAGLGVTELLIILAIVIVLFG).

The protein belongs to the TatA/E family. As to quaternary structure, forms a complex with TatC.

It is found in the cell membrane. Functionally, part of the twin-arginine translocation (Tat) system that transports large folded proteins containing a characteristic twin-arginine motif in their signal peptide across membranes. TatA could form the protein-conducting channel of the Tat system. The chain is Sec-independent protein translocase protein TatA from Herpetosiphon aurantiacus (strain ATCC 23779 / DSM 785 / 114-95).